The chain runs to 138 residues: Small ribosomal subunit protein bS18m (138 aa).

Belongs to the bacterial ribosomal protein bS18 family. As to quaternary structure, component of the mitochondrial small ribosomal subunit. Mature mitochondrial ribosomes consist of a small (37S) and a large (54S) subunit. The 37S subunit contains at least 33 different proteins and 1 molecule of RNA (15S). The 54S subunit contains at least 45 different proteins and 1 molecule of RNA (21S).

It localises to the mitochondrion. This is Small ribosomal subunit protein bS18m (RSM18) from Saccharomyces cerevisiae (strain RM11-1a) (Baker's yeast).